The primary structure comprises 298 residues: MDTTRLKDFFTGLQSRIVAELEAFDGQPFRTDSWVRPEGGGGISRLIEEGDFFERGGVNFSHVTGKSLPASATAVRPQLAGRSWEAMGVSLVLHPRNPYCPTAHMNVRCFVASKEGEEDVWWFGGGMDMTPYYGQREDVVHFHQTCKDALAPFGDEVYPKYKHWCDEYFFLKHRNEPRGVGGVFFDDLNEGGFERCFELTQAVGNAFTKAYLPVLAKRREMPYDERERDFQAYRRGRYVEFNLVWDRGTLFGLQSGGRTESILMSLPPIVKWRYDWQPEAGSPEAELYEVFLKPQDWA.

S90 contacts substrate. The a divalent metal cation site is built by H94 and H104. The Proton donor role is filled by H104. Residue 106 to 108 (NVR) participates in substrate binding. A divalent metal cation is bound by residues H143 and H173. The segment at 238–273 (YVEFNLVWDRGTLFGLQSGGRTESILMSLPPIVKWR) is important for dimerization. 256 to 258 (GGR) lines the substrate pocket.

It belongs to the aerobic coproporphyrinogen-III oxidase family. Homodimer. Requires a divalent metal cation as cofactor.

Its subcellular location is the cytoplasm. The catalysed reaction is coproporphyrinogen III + O2 + 2 H(+) = protoporphyrinogen IX + 2 CO2 + 2 H2O. Its pathway is porphyrin-containing compound metabolism; protoporphyrin-IX biosynthesis; protoporphyrinogen-IX from coproporphyrinogen-III (O2 route): step 1/1. Functionally, involved in the heme biosynthesis. Catalyzes the aerobic oxidative decarboxylation of propionate groups of rings A and B of coproporphyrinogen-III to yield the vinyl groups in protoporphyrinogen-IX. The chain is Oxygen-dependent coproporphyrinogen-III oxidase from Dechloromonas aromatica (strain RCB).